The chain runs to 290 residues: Ribosomal RNA small subunit methyltransferase A (290 aa).

Residues Asn-27, Leu-29, Gly-54, Glu-75, Asp-100, and Asn-125 each contribute to the S-adenosyl-L-methionine site.

It belongs to the class I-like SAM-binding methyltransferase superfamily. rRNA adenine N(6)-methyltransferase family. RsmA subfamily.

It is found in the cytoplasm. The catalysed reaction is adenosine(1518)/adenosine(1519) in 16S rRNA + 4 S-adenosyl-L-methionine = N(6)-dimethyladenosine(1518)/N(6)-dimethyladenosine(1519) in 16S rRNA + 4 S-adenosyl-L-homocysteine + 4 H(+). Its function is as follows. Specifically dimethylates two adjacent adenosines (A1518 and A1519) in the loop of a conserved hairpin near the 3'-end of 16S rRNA in the 30S particle. May play a critical role in biogenesis of 30S subunits. The protein is Ribosomal RNA small subunit methyltransferase A of Streptococcus uberis (strain ATCC BAA-854 / 0140J).